Reading from the N-terminus, the 90-residue chain is Nodulation protein F (90 aa).

Positions Gln4–Ala89 constitute a Carrier domain. Ser46 bears the O-(pantetheine 4'-phosphoryl)serine mark. A disordered region spans residues Arg65–His90. The span at Arg78–His90 shows a compositional bias: basic residues.

4'-phosphopantetheine is transferred from CoA to a specific serine of apo-NodF.

In terms of biological role, proposed to synthesize nod factor fatty acyl chain. Involved in trans-2,trans-4,trans-6,cis-11-octadecatetraenoic acid biosynthesis. This Rhizobium meliloti (Ensifer meliloti) protein is Nodulation protein F (nodF).